Reading from the N-terminus, the 240-residue chain is UDP-2,3-diacylglucosamine hydrolase (240 aa).

5 residues coordinate Mn(2+): aspartate 8, histidine 10, aspartate 41, asparagine 79, and histidine 114. Residue 79–80 (NR) participates in substrate binding. Aspartate 122, serine 160, asparagine 164, lysine 167, and histidine 195 together coordinate substrate. Mn(2+) is bound by residues histidine 195 and histidine 197.

It belongs to the LpxH family. Mn(2+) is required as a cofactor.

It is found in the cell inner membrane. It catalyses the reaction UDP-2-N,3-O-bis[(3R)-3-hydroxytetradecanoyl]-alpha-D-glucosamine + H2O = 2-N,3-O-bis[(3R)-3-hydroxytetradecanoyl]-alpha-D-glucosaminyl 1-phosphate + UMP + 2 H(+). Its pathway is glycolipid biosynthesis; lipid IV(A) biosynthesis; lipid IV(A) from (3R)-3-hydroxytetradecanoyl-[acyl-carrier-protein] and UDP-N-acetyl-alpha-D-glucosamine: step 4/6. In terms of biological role, hydrolyzes the pyrophosphate bond of UDP-2,3-diacylglucosamine to yield 2,3-diacylglucosamine 1-phosphate (lipid X) and UMP by catalyzing the attack of water at the alpha-P atom. Involved in the biosynthesis of lipid A, a phosphorylated glycolipid that anchors the lipopolysaccharide to the outer membrane of the cell. The sequence is that of UDP-2,3-diacylglucosamine hydrolase from Escherichia coli O6:H1 (strain CFT073 / ATCC 700928 / UPEC).